The primary structure comprises 168 residues: NADH-quinone oxidoreductase subunit B (168 aa).

Residues Cys-49, Cys-50, Cys-114, and Cys-144 each contribute to the [4Fe-4S] cluster site.

It belongs to the complex I 20 kDa subunit family. NDH-1 is composed of 14 different subunits. Subunits NuoB, C, D, E, F, and G constitute the peripheral sector of the complex. [4Fe-4S] cluster serves as cofactor.

Its subcellular location is the cell membrane. The catalysed reaction is a quinone + NADH + 5 H(+)(in) = a quinol + NAD(+) + 4 H(+)(out). In terms of biological role, NDH-1 shuttles electrons from NADH, via FMN and iron-sulfur (Fe-S) centers, to quinones in the respiratory chain. Couples the redox reaction to proton translocation (for every two electrons transferred, four hydrogen ions are translocated across the cytoplasmic membrane), and thus conserves the redox energy in a proton gradient. The sequence is that of NADH-quinone oxidoreductase subunit B from Wolbachia pipientis wMel.